A 186-amino-acid polypeptide reads, in one-letter code: Large ribosomal subunit protein uL10 (186 aa).

Part of the ribosomal stalk of the 50S ribosomal subunit. The N-terminus interacts with L11 and the large rRNA to form the base of the stalk. The C-terminus forms an elongated spine to which L12 dimers bind in a sequential fashion forming a multimeric L10(L12)X complex.

Forms part of the ribosomal stalk, playing a central role in the interaction of the ribosome with GTP-bound translation factors. This Rhodopseudomonas palustris (strain ATCC BAA-98 / CGA009) protein is Large ribosomal subunit protein uL10.